Here is a 179-residue protein sequence, read N- to C-terminus: Acireductone dioxygenase (179 aa).

The segment at 7–26 (MDDAPGDPRQPHRPDPGRPV) is disordered. Residues H88, H90, E94, and H133 each coordinate Fe(2+). 4 residues coordinate Ni(2+): H88, H90, E94, and H133.

It belongs to the acireductone dioxygenase (ARD) family. In terms of assembly, monomer. Interacts with MMP14. The cofactor is Fe(2+). Ni(2+) serves as cofactor. In terms of tissue distribution, detected in heart, colon, lung, stomach, brain, spleen, liver, skeletal muscle and kidney.

The protein localises to the cytoplasm. It is found in the nucleus. Its subcellular location is the cell membrane. It catalyses the reaction 1,2-dihydroxy-5-(methylsulfanyl)pent-1-en-3-one + O2 = 4-methylsulfanyl-2-oxobutanoate + formate + 2 H(+). It carries out the reaction 1,2-dihydroxy-5-(methylsulfanyl)pent-1-en-3-one + O2 = 3-(methylsulfanyl)propanoate + CO + formate + 2 H(+). Its pathway is amino-acid biosynthesis; L-methionine biosynthesis via salvage pathway; L-methionine from S-methyl-5-thio-alpha-D-ribose 1-phosphate: step 5/6. Functionally, catalyzes 2 different reactions between oxygen and the acireductone 1,2-dihydroxy-3-keto-5-methylthiopentene (DHK-MTPene) depending upon the metal bound in the active site. Fe-containing acireductone dioxygenase (Fe-ARD) produces formate and 2-keto-4-methylthiobutyrate (KMTB), the alpha-ketoacid precursor of methionine in the methionine recycle pathway. Ni-containing acireductone dioxygenase (Ni-ARD) produces methylthiopropionate, carbon monoxide and formate, and does not lie on the methionine recycle pathway. Also down-regulates cell migration mediated by MMP14. Necessary for hepatitis C virus replication in an otherwise non-permissive cell line. In Homo sapiens (Human), this protein is Acireductone dioxygenase.